Reading from the N-terminus, the 290-residue chain is PIH1 domain-containing protein 1 (290 aa).

Ser12, Ser16, and Ser173 each carry phosphoserine.

It belongs to the PIH1 family. Component of the R2TP complex composed at least of RUVBL1, RUVBL2, RPAP3 and PIHD1. Component of the PAQosome complex which is responsible for the biogenesis of several protein complexes and which consists of R2TP complex members RUVBL1, RUVBL2, RPAP3 and PIH1D1, URI complex members PFDN2, PFDN6, PDRG1, UXT and URI1 as well as ASDURF, POLR2E and DNAAF10/WDR92. Interacts with phosphorylated TELO2 and mediates interaction of TELO2 with the R2TP complex. Interacts with phosphorylated ECD, EFTUD2/SNRP116, RPB1 and UBR5 and with RPB1 in a phosphorylation-independent manner. Interacts with the core C/D box snoRNP particle components NOP58 and FBL and with RUVBL1/TIP49. Interacts with RPAP3 and DNAAF10. Interacts with histone H4 and with SWI/SNF complex member SMARCB1/SNF5. Interacts with the mTORC1 complex member RPTOR. Interacts with MSL1.

The protein resides in the nucleus. Involved in the assembly of C/D box small nucleolar ribonucleoprotein (snoRNP) particles. Recruits the SWI/SNF complex to the core promoter of rRNA genes and enhances pre-rRNA transcription. Mediates interaction of TELO2 with the R2TP complex which is necessary for the stability of MTOR and SMG1. Positively regulates the assembly and activity of the mTORC1 complex. The sequence is that of PIH1 domain-containing protein 1 (Pih1d1) from Rattus norvegicus (Rat).